The sequence spans 364 residues: Uroporphyrinogen decarboxylase (364 aa).

Residues Arg-28–Arg-32, Asp-78, Tyr-160, Thr-215, and His-333 each bind substrate.

The protein belongs to the uroporphyrinogen decarboxylase family. Homodimer.

The protein resides in the cytoplasm. The catalysed reaction is uroporphyrinogen III + 4 H(+) = coproporphyrinogen III + 4 CO2. Its pathway is porphyrin-containing compound metabolism; protoporphyrin-IX biosynthesis; coproporphyrinogen-III from 5-aminolevulinate: step 4/4. Its function is as follows. Catalyzes the decarboxylation of four acetate groups of uroporphyrinogen-III to yield coproporphyrinogen-III. The protein is Uroporphyrinogen decarboxylase of Burkholderia pseudomallei (strain 1106a).